The sequence spans 80 residues: Exodeoxyribonuclease 7 small subunit (80 aa).

It belongs to the XseB family. Heterooligomer composed of large and small subunits.

The protein localises to the cytoplasm. It carries out the reaction Exonucleolytic cleavage in either 5'- to 3'- or 3'- to 5'-direction to yield nucleoside 5'-phosphates.. Bidirectionally degrades single-stranded DNA into large acid-insoluble oligonucleotides, which are then degraded further into small acid-soluble oligonucleotides. The protein is Exodeoxyribonuclease 7 small subunit of Rickettsia bellii (strain OSU 85-389).